Reading from the N-terminus, the 156-residue chain is Small ribosomal subunit protein uS7 (156 aa).

Belongs to the universal ribosomal protein uS7 family. As to quaternary structure, part of the 30S ribosomal subunit. Contacts proteins S9 and S11.

Functionally, one of the primary rRNA binding proteins, it binds directly to 16S rRNA where it nucleates assembly of the head domain of the 30S subunit. Is located at the subunit interface close to the decoding center, probably blocks exit of the E-site tRNA. This is Small ribosomal subunit protein uS7 from Rhizobium etli (strain ATCC 51251 / DSM 11541 / JCM 21823 / NBRC 15573 / CFN 42).